Consider the following 78-residue polypeptide: MALIDEIKDVVANQLNISDKSKITDTASFVDDLNADSLDLVELIMELEKRYEIKIPQEDQEKIKNVADAAKYIEEHKK.

Residues 1–77 (MALIDEIKDV…DAAKYIEEHK (77 aa)) form the Carrier domain. Serine 37 is modified (O-(pantetheine 4'-phosphoryl)serine).

Belongs to the acyl carrier protein (ACP) family. 4'-phosphopantetheine is transferred from CoA to a specific serine of apo-ACP by AcpS. This modification is essential for activity because fatty acids are bound in thioester linkage to the sulfhydryl of the prosthetic group.

The protein resides in the secreted. It participates in lipid metabolism; fatty acid biosynthesis. Its function is as follows. Carrier of the growing fatty acid chain in fatty acid biosynthesis. Has hemolytic activity forming pores approximately 1 nm in diameter into erythrocytes. Is able to induce murine colonic lesions and to disrupt the integrity of epithelial cell monolayers. This is Acyl carrier protein (acpP) from Brachyspira hyodysenteriae (Treponema hyodysenteriae).